Here is a 215-residue protein sequence, read N- to C-terminus: MNVEMFDFSIYISFFFSLFALVNPIGMIPIFTSMTNHQSIVERNKTNLIANFSVAIILSISLIFGSFILNLFGISINSFRISGGILVMIIAISMINGNFINNINNQKNGKLDKDIARNISIVPLAMPLIAGPGAISSTIVWSTHYSSVENIFGCMVTIMLFSCFCWTLFKVSPIIVDILGRTGINIMTRIMGLLLMSLGIEFILAGLKASCSNYF.

The next 6 membrane-spanning stretches (helical) occupy residues 10–32, 52–74, 78–100, 119–141, 151–169, and 190–207; these read IYIS…PIFT, FSVA…LFGI, SFRI…GNFI, ISIV…TIVW, IFGC…WTLF, and IMGL…LAGL.

Belongs to the UPF0056 (MarC) family.

It is found in the cell membrane. This Buchnera aphidicola subsp. Baizongia pistaciae (strain Bp) protein is UPF0056 membrane protein bbp_248.